The chain runs to 757 residues: Elongation factor G, mitochondrial (757 aa).

A mitochondrion-targeting transit peptide spans 1–41 (MLERAALLHRLRLPAHSLPFIYNGALFGGAKRSFSATSKRC). Positions 66 to 347 (KLLRNIGVSA…AIVDYLPEPS (282 aa)) constitute a tr-type G domain. Residues 75 to 82 (AHIDSGKT), 146 to 150 (DTPGH), and 200 to 203 (NKMD) each bind GTP.

Belongs to the TRAFAC class translation factor GTPase superfamily. Classic translation factor GTPase family. EF-G/EF-2 subfamily.

The protein localises to the mitochondrion. It functions in the pathway protein biosynthesis; polypeptide chain elongation. Its function is as follows. Mitochondrial GTPase that catalyzes the GTP-dependent ribosomal translocation step during translation elongation. During this step, the ribosome changes from the pre-translocational (PRE) to the post-translocational (POST) state as the newly formed A-site-bound peptidyl-tRNA and P-site-bound deacylated tRNA move to the P and E sites, respectively. Catalyzes the coordinated movement of the two tRNA molecules, the mRNA and conformational changes in the ribosome. The protein is Elongation factor G, mitochondrial of Eremothecium gossypii (strain ATCC 10895 / CBS 109.51 / FGSC 9923 / NRRL Y-1056) (Yeast).